Consider the following 292-residue polypeptide: ATP synthase gamma chain (292 aa).

Belongs to the ATPase gamma chain family. In terms of assembly, F-type ATPases have 2 components, CF(1) - the catalytic core - and CF(0) - the membrane proton channel. CF(1) has five subunits: alpha(3), beta(3), gamma(1), delta(1), epsilon(1). CF(0) has three main subunits: a, b and c.

It is found in the cell membrane. In terms of biological role, produces ATP from ADP in the presence of a proton gradient across the membrane. The gamma chain is believed to be important in regulating ATPase activity and the flow of protons through the CF(0) complex. The sequence is that of ATP synthase gamma chain from Streptococcus mutans serotype c (strain ATCC 700610 / UA159).